Here is a 326-residue protein sequence, read N- to C-terminus: Phospho-N-acetylmuramoyl-pentapeptide-transferase (326 aa).

10 helical membrane passes run 13-33, 57-77, 85-105, 121-141, 155-175, 181-201, 208-228, 232-252, 257-277, and 305-325; these read ILAP…IFIP, GTPT…ILIM, EMIL…DDIL, MILL…NVGT, NLGI…TNAV, IDGL…IIGF, VAVF…FNAF, IFMG…IALM, LFVI…IIQV, and VKIV…GFVA.

The protein belongs to the glycosyltransferase 4 family. MraY subfamily. Requires Mg(2+) as cofactor.

The protein resides in the cell membrane. The enzyme catalyses UDP-N-acetyl-alpha-D-muramoyl-L-alanyl-gamma-D-glutamyl-meso-2,6-diaminopimeloyl-D-alanyl-D-alanine + di-trans,octa-cis-undecaprenyl phosphate = di-trans,octa-cis-undecaprenyl diphospho-N-acetyl-alpha-D-muramoyl-L-alanyl-D-glutamyl-meso-2,6-diaminopimeloyl-D-alanyl-D-alanine + UMP. The protein operates within cell wall biogenesis; peptidoglycan biosynthesis. In terms of biological role, catalyzes the initial step of the lipid cycle reactions in the biosynthesis of the cell wall peptidoglycan: transfers peptidoglycan precursor phospho-MurNAc-pentapeptide from UDP-MurNAc-pentapeptide onto the lipid carrier undecaprenyl phosphate, yielding undecaprenyl-pyrophosphoryl-MurNAc-pentapeptide, known as lipid I. In Clostridium beijerinckii (strain ATCC 51743 / NCIMB 8052) (Clostridium acetobutylicum), this protein is Phospho-N-acetylmuramoyl-pentapeptide-transferase.